A 213-amino-acid chain; its full sequence is ATP synthase peripheral stalk subunit OSCP, mitochondrial (213 aa).

The transit peptide at 1–23 directs the protein to the mitochondrion; that stretch reads MAAPAASGLSRQVRSFSTSVVRP. The short motif at 5–23 is the SIFI-degron element; the sequence is AASGLSRQVRSFSTSVVRP. Residues K54, K60, K70, and K73 each carry the N6-acetyllysine modification. Residue K90 is modified to N6-succinyllysine. N6-acetyllysine; alternate occurs at positions 100, 158, and 162. N6-succinyllysine; alternate is present on residues K100, K158, and K162. N6-acetyllysine is present on residues K172, K176, and K192. K199 is modified (N6-succinyllysine).

The protein belongs to the ATPase delta chain family. As to quaternary structure, component of the ATP synthase complex composed at least of ATP5F1A/subunit alpha, ATP5F1B/subunit beta, ATP5MC1/subunit c (homooctomer), MT-ATP6/subunit a, MT-ATP8/subunit 8, ATP5ME/subunit e, ATP5MF/subunit f, ATP5MG/subunit g, ATP5MK/subunit k, ATP5MJ/subunit j, ATP5F1C/subunit gamma, ATP5F1D/subunit delta, ATP5F1E/subunit epsilon, ATP5PF/subunit F6, ATP5PB/subunit b, ATP5PD/subunit d, ATP5PO/subunit OSCP. ATP synthase complex consists of a soluble F(1) head domain (subunits alpha(3) and beta(3)) - the catalytic core - and a membrane F(0) domain - the membrane proton channel (subunits c, a, 8, e, f, g, k and j). These two domains are linked by a central stalk (subunits gamma, delta, and epsilon) rotating inside the F1 region and a stationary peripheral stalk (subunits F6, b, d, and OSCP). In terms of processing, acetylation of Lys-70 and Lys-158 is observed in liver mitochondria from fasted mice but not from fed mice. Post-translationally, acetylation at Lys-162 decreases ATP production. Deacetylated by SIRT3. In response to mitochondrial stress, the precursor protein is ubiquitinated by the SIFI complex in the cytoplasm before mitochondrial import, leading to its degradation. Within the SIFI complex, UBR4 initiates ubiquitin chain that are further elongated or branched by KCMF1.

It is found in the mitochondrion. It localises to the mitochondrion inner membrane. Its function is as follows. Subunit OSCP, of the mitochondrial membrane ATP synthase complex (F(1)F(0) ATP synthase or Complex V) that produces ATP from ADP in the presence of a proton gradient across the membrane which is generated by electron transport complexes of the respiratory chain. ATP synthase complex consist of a soluble F(1) head domain - the catalytic core - and a membrane F(1) domain - the membrane proton channel. These two domains are linked by a central stalk rotating inside the F(1) region and a stationary peripheral stalk. During catalysis, ATP synthesis in the catalytic domain of F(1) is coupled via a rotary mechanism of the central stalk subunits to proton translocation. In vivo, can only synthesize ATP although its ATP hydrolase activity can be activated artificially in vitro. Part of the complex F(0) domain. Part of the complex F(0) domain and the peripheric stalk, which acts as a stator to hold the catalytic alpha(3)beta(3) subcomplex and subunit a/ATP6 static relative to the rotary elements. The polypeptide is ATP synthase peripheral stalk subunit OSCP, mitochondrial (Mus musculus (Mouse)).